Reading from the N-terminus, the 210-residue chain is Orotate phosphoribosyltransferase (210 aa).

5-phospho-alpha-D-ribose 1-diphosphate-binding positions include Arg94, Lys98, His100, and 120–128; that span reads EDLISTGGS. Ser124 is a binding site for orotate.

The protein belongs to the purine/pyrimidine phosphoribosyltransferase family. PyrE subfamily. Homodimer. The cofactor is Mg(2+).

It catalyses the reaction orotidine 5'-phosphate + diphosphate = orotate + 5-phospho-alpha-D-ribose 1-diphosphate. It participates in pyrimidine metabolism; UMP biosynthesis via de novo pathway; UMP from orotate: step 1/2. In terms of biological role, catalyzes the transfer of a ribosyl phosphate group from 5-phosphoribose 1-diphosphate to orotate, leading to the formation of orotidine monophosphate (OMP). This is Orotate phosphoribosyltransferase from Halalkalibacterium halodurans (strain ATCC BAA-125 / DSM 18197 / FERM 7344 / JCM 9153 / C-125) (Bacillus halodurans).